Consider the following 506-residue polypeptide: Ribose import ATP-binding protein RbsA (506 aa).

ABC transporter domains follow at residues Val5–Pro237 and Pro249–Glu492. Gly37–Ser44 lines the ATP pocket.

It belongs to the ABC transporter superfamily. Ribose importer (TC 3.A.1.2.1) family. The complex is composed of an ATP-binding protein (RbsA), two transmembrane proteins (RbsC) and a solute-binding protein (RbsB).

It is found in the cell inner membrane. It catalyses the reaction D-ribose(out) + ATP + H2O = D-ribose(in) + ADP + phosphate + H(+). In terms of biological role, part of the ABC transporter complex RbsABC involved in ribose import. Responsible for energy coupling to the transport system. The sequence is that of Ribose import ATP-binding protein RbsA from Chelativorans sp. (strain BNC1).